A 76-amino-acid polypeptide reads, in one-letter code: Conotoxin Lt6.1 (76 aa).

A signal peptide spans 1-22; the sequence is MKLTCVLIIAVLFLMDNQLITA. Positions 23-48 are excised as a propeptide; sequence DYPRDEQVYRAVRLRDAMQKSKGSGS. 3 disulfide bridges follow: Cys49-Cys62, Cys56-Cys67, and Cys61-Cys75.

This sequence belongs to the conotoxin O1 superfamily. Expressed by the venom duct.

The protein localises to the secreted. This chain is Conotoxin Lt6.1, found in Conus litteratus (Lettered cone).